The sequence spans 117 residues: UPF0295 protein RBAM_008830 (117 aa).

The next 2 helical transmembrane spans lie at 13–33 (TFAL…LFFK) and 41–61 (LFMI…FWIG).

Belongs to the UPF0295 family.

The protein resides in the cell membrane. This is UPF0295 protein RBAM_008830 from Bacillus velezensis (strain DSM 23117 / BGSC 10A6 / LMG 26770 / FZB42) (Bacillus amyloliquefaciens subsp. plantarum).